Reading from the N-terminus, the 276-residue chain is Kallikrein-11 (276 aa).

A signal peptide spans methionine 1–glycine 44. The propeptide at glutamate 45 to arginine 47 is activation peptide. Residues isoleucine 48–arginine 274 enclose the Peptidase S1 domain. Disulfide bonds link cysteine 54-cysteine 189, cysteine 73-cysteine 89, cysteine 168-cysteine 235, cysteine 200-cysteine 214, and cysteine 225-cysteine 250. Histidine 88 (charge relay system) is an active-site residue. N-linked (GlcNAc...) asparagine glycosylation is present at asparagine 125. The Charge relay system role is filled by aspartate 136. Asparagine 191 and asparagine 207 each carry an N-linked (GlcNAc...) asparagine glycan. Serine 229 (charge relay system) is an active-site residue. Asparagine 236 carries an N-linked (GlcNAc...) asparagine glycan.

Belongs to the peptidase S1 family. Kallikrein subfamily. In terms of tissue distribution, expressed in brain and prostate (isoform 1) and prostate (isoform 2).

Its subcellular location is the secreted. Its function is as follows. Possible multifunctional protease. Efficiently cleaves 'bz-Phe-Arg-4-methylcoumaryl-7-amide', a kallikrein substrate, and weakly cleaves other substrates for kallikrein and trypsin. This is Kallikrein-11 (Klk11) from Mus musculus (Mouse).